Reading from the N-terminus, the 1478-residue chain is MPFLRKIAGTAHTHSRSDSNSSVKFGHQPTSSVASTKSSSKSPRATSRKSIYDDIRSQFPNLTPNSTSSQFYESTPVIEQSFNWTTDDHISAGTLENPTSFTNSSYKNDNGPSSLSDSRKSSGGNSVNSLSFDKLILSWDPTDPDEWTMHRVTSWFKFHDFPESWILFFKKHQLFGHRFIKLLAYDNFAVYEKYLPQTKTASYTRFQQLLKKTMTKNVTNSHIRQKSASKLKSSRSSSESIKSKLKNSKSQEDISNSRSTSESALSPTKSGPSKTDEKNFLHSTSTHQKTKSASSLYRRSFISLRGSSSSNASSAKSPSNIKLSIPARPHSIIESNSTLTKSASPPASPSYPSIFRRHHKSSSSESSLLNSLFGSGIGEEAPTKPNPQGHSLSSENLAKGKSKHYETNVSSPLKQSSLPTSDDKGNLWNKFKRKSQIGVPSPNTVAYVTSQETPSLKSNSSTATLTVQTADVNIPSPSSSPPPIPKTANRSLEVISTEDTPKISSTTASFKETYPDCINPDKTVPVPVNNQKYSVKNFLLDQKFYPLKKTGLNDSENKYILVTKDNVSFVPLNLKSVAKLSSFKESALTKLGINHKNVTFHMTDFDCDIGAAIPDDTLEFLKKSLFLNTSGKIYIKDQMKLQQKPKPAPLTSENNVPLKSVKSKSSMRSGTSSLIASTDDVSIVTSSSDITSFDEHASGSGRRYPQTPSYYYDRVSNTNPTEELNYWNIKEVLSHEENAPKMVFKTSPKLELNLPDKGSKLNIPTPITENESKSSFQVLRKDEGTEIDFNHRRESPYTKPELAPKREAPKPPANTSPQRTLSTSKQNKPIRLVRASTKISRSKRSKPLPPQLLSSPIEASSSSPDSLTSSYTPASTHVLIPQPYKGANDVMRRLKTDQDSTSTSPSLKMKQKVNRSNSTVSTSNSIFYSPSPLLKRGNSKRVVSSTSAADIFEENDITFADAPPMFDSDDSDDDSSSSDDIIWSKKKTAPETNNENKKDEKSDNSSTHSDEIFYDSQTQDKMERKMTFRPSPEVVYQNLEKFFPRANLDKPITEGIASPTSPKSLDSLLSPKNVASSRTEPSTPSRPVPPDSSYEFIQDGLNGKNKPLNQAKTPKRTKTIRTIAHEASLARKNSVKLKRQNTKMWGTRMVEVTENHMVSINKAKNSKGEYKEFAWMKGEMIGKGSFGAVYLCLNVTTGEMMAVKQVEVPKYSSQNEAILSTVEALRSEVSTLKDLDHLNIVQYLGFENKNNIYSLFLEYVAGGSVGSLIRMYGRFDEPLIKHLTTQVLKGLAYLHSKGILHRDMKADNLLLDQDGICKISDFGISRKSKDIYSNSDMTMRGTVFWMAPEMVDTKQGYSAKVDIWSLGCIVLEMFAGKRPWSNLEVVAAMFKIGKSKSAPPIPEDTLPLISQIGRNFLDACFEINPEKRPTANELLSHPFSEVNETFNFKSTRLAKFIKSNDKLNSSKLRITSQENKTE.

4 disordered regions span residues 1–70 (MPFL…TSSQ), 99–126 (TSFT…GGNS), 217–359 (NVTN…RRHH), and 373–427 (FGSG…KGNL). Residues 29–49 (PTSSVASTKSSSKSPRATSRK) are compositionally biased toward low complexity. Polar residues-rich tracts occupy residues 58–70 (QFPN…TSSQ) and 99–110 (TSFTNSSYKNDN). Positions 111–126 (GPSSLSDSRKSSGGNS) are enriched in low complexity. A compositionally biased stretch (basic residues) spans 223–233 (IRQKSASKLKS). Composition is skewed to polar residues over residues 253–273 (DISN…SGPS) and 281–297 (LHST…SSLY). Low complexity-rich tracts occupy residues 298 to 320 (RRSF…SPSN) and 342 to 353 (SASPPASPSYPS). Composition is skewed to polar residues over residues 386–396 (NPQGHSLSSEN) and 407–420 (TNVS…SLPT). The residue at position 407 (Thr-407) is a Phosphothreonine. Residues Ser-411 and Ser-491 each carry the phosphoserine modification. A disordered region spans residues 644–671 (KPKPAPLTSENNVPLKSVKSKSSMRSGT). The span at 659-671 (KSVKSKSSMRSGT) shows a compositional bias: low complexity. Ser-747 carries the phosphoserine modification. 4 disordered regions span residues 752–877 (LNLP…ASTH), 895–939 (KTDQ…RGNS), 960–1021 (ADAP…TQDK), and 1053–1116 (TEGI…TPKR). Positions 765–777 (TPITENESKSSFQ) are enriched in polar residues. Residues 779–809 (LRKDEGTEIDFNHRRESPYTKPELAPKREAP) show a composition bias toward basic and acidic residues. The span at 813 to 827 (ANTSPQRTLSTSKQN) shows a compositional bias: polar residues. Phosphoserine is present on Ser-816. 2 stretches are compositionally biased toward low complexity: residues 851–870 (QLLS…LTSS) and 914–925 (NRSNSTVSTSNS). Residues 967–977 (DSDDSDDDSSS) show a composition bias toward acidic residues. Basic and acidic residues predominate over residues 994 to 1011 (NENKKDEKSDNSSTHSDE). A phosphoserine mark is found at Ser-1058 and Ser-1061. Over residues 1058–1083 (SPTSPKSLDSLLSPKNVASSRTEPST) the composition is skewed to low complexity. Ser-1134 is subject to Phosphoserine; by PKC. The region spanning 1175 to 1440 (WMKGEMIGKG…ANELLSHPFS (266 aa)) is the Protein kinase domain. ATP is bound by residues 1181–1189 (IGKGSFGAV) and Lys-1204. Asp-1303 functions as the Proton acceptor in the catalytic mechanism.

This sequence belongs to the protein kinase superfamily. STE Ser/Thr protein kinase family. MAP kinase kinase kinase subfamily.

It is found in the cytoplasm. It carries out the reaction L-seryl-[protein] + ATP = O-phospho-L-seryl-[protein] + ADP + H(+). It catalyses the reaction L-threonyl-[protein] + ATP = O-phospho-L-threonyl-[protein] + ADP + H(+). In terms of biological role, serine/threonine protein kinase involved in a signal transduction pathway that plays a role in yeast cell morphogenesis and cell growth. This pathway seems to start by SMP3; then involve the kinase PKC1 that may act on this kinase. BCK1 probably phosphorylates MKK1 and MKK2 which themselves phosphorylate the MPK1 kinase. The polypeptide is Serine/threonine-protein kinase BCK1/SLK1/SSP31 (BCK1) (Saccharomyces cerevisiae (strain ATCC 204508 / S288c) (Baker's yeast)).